The following is a 208-amino-acid chain: Guanylate kinase (208 aa).

Residues glycine 8–threonine 187 form the Guanylate kinase-like domain. Residue alanine 15–serine 22 coordinates ATP.

It belongs to the guanylate kinase family.

The protein resides in the cytoplasm. It carries out the reaction GMP + ATP = GDP + ADP. Its function is as follows. Essential for recycling GMP and indirectly, cGMP. This chain is Guanylate kinase, found in Gluconobacter oxydans (strain 621H) (Gluconobacter suboxydans).